Consider the following 326-residue polypeptide: DNA-directed RNA polymerase subunit alpha (326 aa).

The interval 1-231 (MQSNALLKPR…DQLSVFADLE (231 aa)) is alpha N-terminal domain (alpha-NTD). The tract at residues 245–326 (IDPVLLRPVD…WPPAGLEKLG (82 aa)) is alpha C-terminal domain (alpha-CTD).

This sequence belongs to the RNA polymerase alpha chain family. In terms of assembly, homodimer. The RNAP catalytic core consists of 2 alpha, 1 beta, 1 beta' and 1 omega subunit. When a sigma factor is associated with the core the holoenzyme is formed, which can initiate transcription.

It catalyses the reaction RNA(n) + a ribonucleoside 5'-triphosphate = RNA(n+1) + diphosphate. In terms of biological role, DNA-dependent RNA polymerase catalyzes the transcription of DNA into RNA using the four ribonucleoside triphosphates as substrates. The protein is DNA-directed RNA polymerase subunit alpha of Azoarcus sp. (strain BH72).